Reading from the N-terminus, the 354-residue chain is Lariat debranching enzyme (354 aa).

C14, H16, and D45 together coordinate a divalent metal cation. Residues K59, N90, H91, K134, and H156 each coordinate RNA. N90 is an a divalent metal cation binding site. The lariat recognition loop stretch occupies residues 130-158 (SGIYKSFDEKKPYTYPPSPNDVVSLFHTR). Residue H180 coordinates a divalent metal cation. Positions 201, 205, 230, 231, and 232 each coordinate RNA. H230 is an a divalent metal cation binding site. H232 contributes to the a divalent metal cation binding site.

Belongs to the lariat debranching enzyme family. Fe(2+) serves as cofactor. Requires Zn(2+) as cofactor. The cofactor is Mn(2+).

It is found in the cytoplasm. It localises to the perinuclear region. Active in presence of diverse metals including Fe(2+), Zn(2+) and Mn(2+). Binds two metal cations in two adjacent alpha and beta metal-binding pockets. The activity is the highest with Fe(2+) bound to the 2 metal-binding sites. The activity is slightly lower with Fe(2+) bound to the beta site and Zn(2+) to the alpha site and decreases further when only Zn(2+) is bound. No activity with Mn(2+). However, another study showed activity with Mn(2+) bound to the beta site and Zn(2+) to the alpha site. Mn(2+) appears unable to bind to the alpha site. Cleaves the 2'-5' phosphodiester linkage at the branch point of excised lariat intron RNA and converts them into linear molecules that can be subsequently degraded, thereby facilitating ribonucleotide turnover. This chain is Lariat debranching enzyme, found in Entamoeba histolytica (strain ATCC 30459 / HM-1:IMSS / ABRM).